The sequence spans 353 residues: Alcohol dehydrogenase 1 (353 aa).

Positions 47, 70, 101, 104, 107, 115, and 157 each coordinate Zn(2+). Residues 181–187 (GAGGGLG), aspartate 205, lysine 210, 274–276 (IGL), and arginine 346 contribute to the NAD(+) site.

This sequence belongs to the zinc-containing alcohol dehydrogenase family. In terms of assembly, homotetramer. Requires Zn(2+) as cofactor.

The protein localises to the cytoplasm. The catalysed reaction is a primary alcohol + NAD(+) = an aldehyde + NADH + H(+). It catalyses the reaction a secondary alcohol + NAD(+) = a ketone + NADH + H(+). This Neurospora crassa (strain ATCC 24698 / 74-OR23-1A / CBS 708.71 / DSM 1257 / FGSC 987) protein is Alcohol dehydrogenase 1 (adh-1).